The primary structure comprises 479 residues: Chromosomal replication initiator protein DnaA (479 aa).

Residues 1–71 (MNLTQIWKAT…RNALARVVGY (71 aa)) form a domain I, interacts with DnaA modulators region. The segment at 71-138 (YPVQVQVLIA…LDLASAMRSG (68 aa)) is domain II. A compositionally biased stretch (polar residues) spans 86-99 (TEPSPSLTLSNGSR). The tract at residues 86–106 (TEPSPSLTLSNGSRLMSDPEP) is disordered. The tract at residues 139–355 (MLNPRYTFSS…GSLNRVAAYA (217 aa)) is domain III, AAA+ region. Residues Gly-183, Gly-185, Lys-186, and Thr-187 each coordinate ATP. The segment at 356–479 (ELNRAPITIE…IRERIQMLRG (124 aa)) is domain IV, binds dsDNA.

Belongs to the DnaA family. Oligomerizes as a right-handed, spiral filament on DNA at oriC.

It localises to the cytoplasm. Functionally, plays an essential role in the initiation and regulation of chromosomal replication. ATP-DnaA binds to the origin of replication (oriC) to initiate formation of the DNA replication initiation complex once per cell cycle. Binds the DnaA box (a 9 base pair repeat at the origin) and separates the double-stranded (ds)DNA. Forms a right-handed helical filament on oriC DNA; dsDNA binds to the exterior of the filament while single-stranded (ss)DNA is stabiized in the filament's interior. The ATP-DnaA-oriC complex binds and stabilizes one strand of the AT-rich DNA unwinding element (DUE), permitting loading of DNA polymerase. After initiation quickly degrades to an ADP-DnaA complex that is not apt for DNA replication. Binds acidic phospholipids. The chain is Chromosomal replication initiator protein DnaA from Chloroflexus aurantiacus (strain ATCC 29366 / DSM 635 / J-10-fl).